The chain runs to 716 residues: Phospholipid phosphatase-related protein type 3 (716 aa).

The next 3 helical transmembrane spans lie at 18–38 (LPCF…SLYF), 70–90 (LIPL…SIMV), and 131–151 (FVGV…VIQL). N167 is a glycosylation site (N-linked (GlcNAc...) asparagine). The next 3 helical transmembrane spans lie at 205–225 (HATL…SVIS), 231–251 (LKPI…LTQI), and 261–281 (VYAG…HAVG). Positions 311-334 (SMYQQNKSVSTDELGPPGRLEGVP) are disordered. Residues 312-321 (MYQQNKSVST) show a composition bias toward polar residues. A glycan (N-linked (GlcNAc...) asparagine) is linked at N316. 2 positions are modified to phosphoserine: S320 and S351. At T374 the chain carries Phosphothreonine. Positions 416–488 (GRGLGLPDEA…RVILPPRPGP (73 aa)) are disordered. A Phosphoserine modification is found at S426. Over residues 437–460 (VAEEEEEEEEEEEEEEEEEEEEEG) the composition is skewed to acidic residues. The residue at position 506 (S506) is a Phosphoserine. Positions 548-589 (AMSKAAGGPKAETASSSSASSDSSQYRSPSDRDSASIVTIDA) are disordered. The span at 562–575 (SSSSASSDSSQYRS) shows a compositional bias: low complexity. S641 is modified (phosphoserine). A disordered region spans residues 664 to 694 (GEGLPPPGASEGALGAGSRESTLRRQVGALG).

This sequence belongs to the PA-phosphatase related phosphoesterase family.

Its subcellular location is the membrane. This chain is Phospholipid phosphatase-related protein type 3, found in Rattus norvegicus (Rat).